We begin with the raw amino-acid sequence, 469 residues long: 3-isopropylmalate dehydratase large subunit (469 aa).

Positions 349, 410, and 413 each coordinate [4Fe-4S] cluster.

This sequence belongs to the aconitase/IPM isomerase family. LeuC type 1 subfamily. Heterodimer of LeuC and LeuD. [4Fe-4S] cluster serves as cofactor.

It carries out the reaction (2R,3S)-3-isopropylmalate = (2S)-2-isopropylmalate. Its pathway is amino-acid biosynthesis; L-leucine biosynthesis; L-leucine from 3-methyl-2-oxobutanoate: step 2/4. Its function is as follows. Catalyzes the isomerization between 2-isopropylmalate and 3-isopropylmalate, via the formation of 2-isopropylmaleate. The sequence is that of 3-isopropylmalate dehydratase large subunit from Neisseria meningitidis serogroup C / serotype 2a (strain ATCC 700532 / DSM 15464 / FAM18).